We begin with the raw amino-acid sequence, 391 residues long: Heme A synthase (391 aa).

8 consecutive transmembrane segments (helical) span residues 37-57 (IRLW…VGGL), 121-141 (RQLG…FLVA), 152-172 (LLAL…MVAS), 186-206 (LAVH…QALL), 229-249 (TTVL…VAGI), 298-318 (FLHR…WIFG), 332-352 (LLAL…LSAA), and 354-374 (WQVA…ILHA). His-300 contacts heme. His-360 serves as a coordination point for heme.

The protein belongs to the COX15/CtaA family. Type 2 subfamily. Interacts with CtaB. Heme b serves as cofactor.

Its subcellular location is the cell membrane. It carries out the reaction Fe(II)-heme o + 2 A + H2O = Fe(II)-heme a + 2 AH2. The protein operates within porphyrin-containing compound metabolism; heme A biosynthesis; heme A from heme O: step 1/1. Its function is as follows. Catalyzes the conversion of heme O to heme A by two successive hydroxylations of the methyl group at C8. The first hydroxylation forms heme I, the second hydroxylation results in an unstable dihydroxymethyl group, which spontaneously dehydrates, resulting in the formyl group of heme A. The chain is Heme A synthase from Cereibacter sphaeroides (strain ATCC 17025 / ATH 2.4.3) (Rhodobacter sphaeroides).